Consider the following 603-residue polypeptide: Elongation factor 4 (603 aa).

The tr-type G domain occupies asparagine 2–arginine 184. Residues aspartate 14 to threonine 19 and asparagine 131 to aspartate 134 contribute to the GTP site.

Belongs to the TRAFAC class translation factor GTPase superfamily. Classic translation factor GTPase family. LepA subfamily.

The protein localises to the cell inner membrane. The enzyme catalyses GTP + H2O = GDP + phosphate + H(+). In terms of biological role, required for accurate and efficient protein synthesis under certain stress conditions. May act as a fidelity factor of the translation reaction, by catalyzing a one-codon backward translocation of tRNAs on improperly translocated ribosomes. Back-translocation proceeds from a post-translocation (POST) complex to a pre-translocation (PRE) complex, thus giving elongation factor G a second chance to translocate the tRNAs correctly. Binds to ribosomes in a GTP-dependent manner. The chain is Elongation factor 4 from Variovorax paradoxus (strain S110).